Reading from the N-terminus, the 200-residue chain is Charged multivesicular body protein 6 (200 aa).

The N-myristoyl glycine moiety is linked to residue Gly2. The stretch at 10–145 (QSRVTEQDRA…YQRQIDELLA (136 aa)) forms a coiled coil. Ser119 is subject to Phosphoserine. Thr130 is modified (phosphothreonine). The Type-2 MIT-interacting motif signature appears at 168-179 (MELPEVPSEPLP). Residues 168 to 200 (MELPEVPSEPLPDRNPEAPAKARSRQAELVAAS) are disordered.

This sequence belongs to the SNF7 family. As to quaternary structure, probable core component of the endosomal sorting required for transport complex III (ESCRT-III). ESCRT-III components are thought to multimerize to form a flat lattice on the perimeter membrane of the endosome. Several assembly forms of ESCRT-III may exist that interact and act sequentially. Interacts with VPS4A; the interaction is direct. Interacts with VPS4B; the interaction is direct. Interacts with CHMP4A, CHMP4B and CHMP4C. Interacts with SNF8, VPS25 and VPS36. ISGylated in a CHMP5-dependent manner. Isgylation weakens its interaction with VPS4A.

The protein resides in the endomembrane system. Its subcellular location is the endosome membrane. It is found in the late endosome membrane. The protein localises to the membrane. In terms of biological role, probable core component of the endosomal sorting required for transport complex III (ESCRT-III) which is involved in multivesicular bodies (MVBs) formation and sorting of endosomal cargo proteins into MVBs. MVBs contain intraluminal vesicles (ILVs) that are generated by invagination and scission from the limiting membrane of the endosome and mostly are delivered to lysosomes enabling degradation of membrane proteins, such as stimulated growth factor receptors, lysosomal enzymes and lipids. The MVB pathway appears to require the sequential function of ESCRT-O, -I,-II and -III complexes. ESCRT-III proteins mostly dissociate from the invaginating membrane before the ILV is released. The ESCRT machinery also functions in topologically equivalent membrane fission events, such as the terminal stages of cytokinesis. ESCRT-III proteins are believed to mediate the necessary vesicle extrusion and/or membrane fission activities, possibly in conjunction with the AAA ATPase VPS4. In the ESCRT-III complex, it probably serves as an acceptor for the ESCRT-II complex on endosomal membranes. The sequence is that of Charged multivesicular body protein 6 (Chmp6) from Mus musculus (Mouse).